Here is a 526-residue protein sequence, read N- to C-terminus: Cytochrome P450 52A5 (526 aa).

A helical membrane pass occupies residues Trp18–Leu38. Heme is bound at residue Cys473.

Belongs to the cytochrome P450 family. Heme serves as cofactor.

It localises to the membrane. Together with an NADPH cytochrome P450 the enzyme system catalyzes the terminal hydroxylation as the first step in the assimilation of alkanes and fatty acids. The chain is Cytochrome P450 52A5 (CYP52A5) from Candida maltosa (Yeast).